The following is a 400-amino-acid chain: Homoserine O-acetyltransferase (400 aa).

The disordered stretch occupies residues 1 to 22; the sequence is MMNVHPVKGPVATGGERPHEAD. Residues 64 to 374 enclose the AB hydrolase-1 domain; it reads NAILVCHALT…DKGHDAFLLD (311 aa). Serine 169 serves as the catalytic Nucleophile. Arginine 239 contributes to the substrate binding site. Residues aspartate 335 and histidine 368 contribute to the active site. Aspartate 369 contributes to the substrate binding site.

It belongs to the AB hydrolase superfamily. MetX family. Homodimer.

Its subcellular location is the cytoplasm. The catalysed reaction is L-homoserine + acetyl-CoA = O-acetyl-L-homoserine + CoA. The protein operates within amino-acid biosynthesis; L-methionine biosynthesis via de novo pathway; O-acetyl-L-homoserine from L-homoserine: step 1/1. In terms of biological role, transfers an acetyl group from acetyl-CoA to L-homoserine, forming acetyl-L-homoserine. This chain is Homoserine O-acetyltransferase, found in Rhodopseudomonas palustris (strain HaA2).